A 329-amino-acid chain; its full sequence is Taste receptor type 2 member 134 (329 aa).

Residues 1–27 (MRCSLRGCVQGRGGKSGVSLSKFSPKK) lie on the Extracellular side of the membrane. The helical transmembrane segment at 28 to 48 (MSFFFIFMVIFCIQSLVALLQ) threads the bilayer. Residues 49–68 (NGFLATVLGREWVRSQGLPA) are Cytoplasmic-facing. The chain crosses the membrane as a helical span at residues 69 to 89 (GDMIVACLAASRFCLHGVAIV). Topologically, residues 90–121 (NNFLTFVKLWSQKIYFSVLWDFVNTVNFWCTT) are extracellular. Residues 122-142 (WLAIFYCVKISSFSHPIFFWI) form a helical membrane-spanning segment. The Cytoplasmic segment spans residues 143-153 (KWRISRSVPRL). A helical membrane pass occupies residues 154 to 174 (LLGSLVIGGLSAVSSATGNTI). The Extracellular segment spans residues 175 to 201 (AFQMTACENYTLAYRTRAFYAYYFRCH). A glycan (N-linked (GlcNAc...) asparagine) is linked at Asn-183. Residues 202 to 222 (AMLMWIIPFFLFLLSVILLMF) traverse the membrane as a helical segment. Over 223–251 (SLYRHLEHMRYRRPWSHDYSTQAHTMALK) the chain is Cytoplasmic. The helical transmembrane segment at 252-272 (SLAFFLVFYTSYVLFLVISVT) threads the bilayer. Residues 273–282 (RVVNVHSSWH) are Extracellular-facing. A helical transmembrane segment spans residues 283–303 (WAWEVITYMGILLHSTILTLS). Residues 304–329 (NPKMRKALKIKFPDLCVARSQDKRRG) lie on the Cytoplasmic side of the membrane.

Belongs to the G-protein coupled receptor T2R family. As to expression, expressed in tongue and gastrointestinal tract.

The protein resides in the membrane. In terms of biological role, putative taste receptor which may play a role in the perception of bitterness. This chain is Taste receptor type 2 member 134, found in Rattus norvegicus (Rat).